The sequence spans 231 residues: Large ribosomal subunit protein uL1 (231 aa).

This sequence belongs to the universal ribosomal protein uL1 family. In terms of assembly, part of the 50S ribosomal subunit.

In terms of biological role, binds directly to 23S rRNA. The L1 stalk is quite mobile in the ribosome, and is involved in E site tRNA release. Protein L1 is also a translational repressor protein, it controls the translation of the L11 operon by binding to its mRNA. This Staphylococcus epidermidis (strain ATCC 35984 / DSM 28319 / BCRC 17069 / CCUG 31568 / BM 3577 / RP62A) protein is Large ribosomal subunit protein uL1.